The primary structure comprises 166 residues: Large ribosomal subunit protein uL10 (166 aa).

The protein belongs to the universal ribosomal protein uL10 family. In terms of assembly, part of the ribosomal stalk of the 50S ribosomal subunit. The N-terminus interacts with L11 and the large rRNA to form the base of the stalk. The C-terminus forms an elongated spine to which L12 dimers bind in a sequential fashion forming a multimeric L10(L12)X complex.

Functionally, forms part of the ribosomal stalk, playing a central role in the interaction of the ribosome with GTP-bound translation factors. The sequence is that of Large ribosomal subunit protein uL10 from Streptococcus pyogenes serotype M28 (strain MGAS6180).